A 234-amino-acid polypeptide reads, in one-letter code: Purine nucleoside phosphorylase DeoD-type (234 aa).

His-5 lines the a purine D-ribonucleoside pocket. Phosphate contacts are provided by residues Gly-21, Arg-25, Arg-44, and 88–91; that span reads RIGT. Residues 180-182 and 204-205 contribute to the a purine D-ribonucleoside site; these read DME and SD. Residue Asp-205 is the Proton donor of the active site.

The protein belongs to the PNP/UDP phosphorylase family. In terms of assembly, homohexamer; trimer of homodimers.

The catalysed reaction is a purine D-ribonucleoside + phosphate = a purine nucleobase + alpha-D-ribose 1-phosphate. The enzyme catalyses a purine 2'-deoxy-D-ribonucleoside + phosphate = a purine nucleobase + 2-deoxy-alpha-D-ribose 1-phosphate. Functionally, catalyzes the reversible phosphorolytic breakdown of the N-glycosidic bond in the beta-(deoxy)ribonucleoside molecules, with the formation of the corresponding free purine bases and pentose-1-phosphate. This is Purine nucleoside phosphorylase DeoD-type from Buchnera aphidicola subsp. Acyrthosiphon pisum (strain APS) (Acyrthosiphon pisum symbiotic bacterium).